Reading from the N-terminus, the 487-residue chain is Protein DETOXIFICATION 11 (487 aa).

Helical transmembrane passes span 35-55 (LICFAAPMAAVVITQSMLQII), 73-93 (FAISFCNVTGFSFIMGLSCAL), 122-142 (LVCLPLSLLWFNMGKLLVILG), 151-171 (AGRFAAWLIPGLFAYAVLQPL), 184-204 (LLITSCVVFCLHVPLCWLLVY), 211-231 (IGGALALSLSYWLYAIFLGSF), 264-284 (AAMLCLEWWSYELIILLSGLL), 293-313 (VLSVCLQTLSMTYSIPLAIAA), 330-350 (AAHIVVYAAMSLAVVDALMVG), 377-397 (MAPLVSISLILDSLQGVLSGV), 412-432 (FGAFYLWGIPIAASLAFWVHL), and 435-455 (VGLWIGIIAGAVLQTLLLALV).

It belongs to the multi antimicrobial extrusion (MATE) (TC 2.A.66.1) family.

The protein resides in the membrane. This chain is Protein DETOXIFICATION 11, found in Arabidopsis thaliana (Mouse-ear cress).